The chain runs to 112 residues: DNA-binding protein Mboo_1886 (112 aa).

This sequence belongs to the PDCD5 family.

The protein is DNA-binding protein Mboo_1886 of Methanoregula boonei (strain DSM 21154 / JCM 14090 / 6A8).